The primary structure comprises 231 residues: Cytolethal distending toxin subunit A (231 aa).

The signal sequence occupies residues 1-15; it reads MRLLFFLLITLLFAA. Cys16 carries the N-palmitoyl cysteine lipid modification. Cys16 carries S-diacylglycerol cysteine lipidation. The interval 20–51 is disordered; sequence PKVHQPKHSSKTEKDLGIGLSPTPPPNERIPG. The mediates binding to target cells stretch occupies residues 99-110; sequence WALKPRNWVWGY. A Ricin B-type lectin domain is found at 130–217; that stretch reads SNGQVIIKNM…SSNLDQQWYI (88 aa).

Heterotrimer of 3 subunits, CdtA, CdtB and CdtC.

It is found in the cell outer membrane. Functionally, CDTs are cytotoxins which induce cell distension, growth arrest in G2/M phase, nucleus swelling, and chromatin fragmentation in HeLa cells. This is Cytolethal distending toxin subunit A (cdtA) from Helicobacter hepaticus (strain ATCC 51449 / 3B1).